The following is a 280-amino-acid chain: UBX domain-containing protein 10 (280 aa).

Positions 41–94 (SAKGRTRPSLQKSQGVEVCAHHIPSPPPAIPYELPSSQKPGACAPKSPNQGASD) are disordered. Ser87 is subject to Phosphoserine. One can recognise a UBX domain in the interval 194–271 (DQEPRLLLAV…RIPHKSVLGI (78 aa)).

This sequence belongs to the UBXN10 family. As to quaternary structure, interacts with CLUAP1; the interaction is direct and mediates interaction with the intraflagellar transport complex B (IFT-B). Interacts with VCP; the interaction is direct.

Its subcellular location is the cell projection. It is found in the cilium. Its function is as follows. VCP/p97-binding protein required for ciliogenesis. Acts as a tethering factor that facilitates recruitment of VCP/p97 to the intraflagellar transport complex B (IFT-B) in cilia. UBX domain-containing proteins act as tethering factors for VCP/p97 and may specify substrate specificity of VCP/p97. The protein is UBX domain-containing protein 10 of Homo sapiens (Human).